The chain runs to 811 residues: G-type lectin S-receptor-like serine/threonine-protein kinase LECRK2 (811 aa).

The signal sequence occupies residues 1 to 23 (MAPLLFLPILQLLLLYCTKSAQA). In terms of domain architecture, Bulb-type lectin spans 24 to 153 (QLNISIGSSL…DGATKWESFG (130 aa)). Over 24 to 464 (QLNISIGSSL…DKKYWILGSS (441 aa)) the chain is Extracellular. N-linked (GlcNAc...) asparagine glycans are attached at residues asparagine 26, asparagine 39, asparagine 59, asparagine 219, asparagine 226, asparagine 237, and asparagine 242. One can recognise an EGF-like; atypical domain in the interval 292-344 (PENICQTIQTKVGSGACGFNSYCTFDGTKNTTNCLCPQRYKFFDNERTYKGCR). Cystine bridges form between cysteine 296/cysteine 314, cysteine 308/cysteine 325, cysteine 327/cysteine 343, cysteine 389/cysteine 411, and cysteine 393/cysteine 399. A glycan (N-linked (GlcNAc...) asparagine) is linked at asparagine 321. Residues 352 to 436 (CDLDETAAMV…LQATVLLKVP (85 aa)) form the PAN domain. Residues 465-485 (LFFGSSVLVNFLLIFVLLFGT) form a helical membrane-spanning segment. Residues 486–811 (YCSITSRKKT…DPSSYISSLA (326 aa)) lie on the Cytoplasmic side of the membrane. A Protein kinase domain is found at 521 to 795 (GGFHEVLGTG…KVMQMLDGAV (275 aa)). ATP contacts are provided by residues 527–535 (LGTGASGIV) and lysine 551. Residue aspartate 645 is the Proton acceptor of the active site.

It belongs to the protein kinase superfamily. Ser/Thr protein kinase family.

It is found in the membrane. The enzyme catalyses L-seryl-[protein] + ATP = O-phospho-L-seryl-[protein] + ADP + H(+). It carries out the reaction L-threonyl-[protein] + ATP = O-phospho-L-threonyl-[protein] + ADP + H(+). Functionally, involved in resistance against the herbivorous insect brown planthopper (N.lugens, BPH). Member of the BPH3 (BPH resistance locus 3) cluster which contains LECRK1, LECRK2 and LECRK3. In Oryza sativa subsp. japonica (Rice), this protein is G-type lectin S-receptor-like serine/threonine-protein kinase LECRK2.